Consider the following 414-residue polypeptide: Ankyrin repeat domain-containing protein 10 (414 aa).

5 ANK repeats span residues 18 to 47 (TLRFPLHRACRDGDLPALCALLQSAPRSDL), 54 to 83 (YGWTPIHWAAHFGKLECLMQLVRAGASVNA), 88 to 117 (FAQTPAHIAAFGGHPQCLNWLIQVGANINK), 121 to 150 (VGETPIHKAARSGSVDSISALVAHGAQIDL), and 154 to 187 (SGLTAADLAHTQGFQECAQFLLNLQNCHLNRYYS). The disordered stretch occupies residues 310–332 (GVTSPSRHRIHTSNGTEEPEKAM).

In Gallus gallus (Chicken), this protein is Ankyrin repeat domain-containing protein 10 (ANKRD10).